The sequence spans 411 residues: Tubulin beta-2 chain (411 aa).

7 residues coordinate GTP: Glu37, Ser106, Gly110, Thr111, Gly112, Asn172, and Asn194. Glu37 provides a ligand contact to Mg(2+). The tract at residues 392 to 411 (QYQDATAEPEGXYEEDYDEA) is disordered. The span at 402–411 (GXYEEDYDEA) shows a compositional bias: acidic residues.

This sequence belongs to the tubulin family. As to quaternary structure, dimer of alpha and beta chains. A typical microtubule is a hollow water-filled tube with an outer diameter of 25 nm and an inner diameter of 15 nM. Alpha-beta heterodimers associate head-to-tail to form protofilaments running lengthwise along the microtubule wall with the beta-tubulin subunit facing the microtubule plus end conferring a structural polarity. Microtubules usually have 13 protofilaments but different protofilament numbers can be found in some organisms and specialized cells. The cofactor is Mg(2+).

The protein localises to the cytoplasm. It is found in the cytoskeleton. In terms of biological role, tubulin is the major constituent of microtubules, a cylinder consisting of laterally associated linear protofilaments composed of alpha- and beta-tubulin heterodimers. Microtubules grow by the addition of GTP-tubulin dimers to the microtubule end, where a stabilizing cap forms. Below the cap, tubulin dimers are in GDP-bound state, owing to GTPase activity of alpha-tubulin. This chain is Tubulin beta-2 chain (TUBB2), found in Anemia phyllitidis (Fern).